Here is a 235-residue protein sequence, read N- to C-terminus: Large ribosomal subunit protein uL4 (235 aa).

A disordered region spans residues 45–75; sequence RAGTASTKTRGEVSGGGRKPWPQKHTGRARH. Residues 65–75 are compositionally biased toward basic residues; that stretch reads WPQKHTGRARH.

Belongs to the universal ribosomal protein uL4 family. Part of the 50S ribosomal subunit.

Functionally, one of the primary rRNA binding proteins, this protein initially binds near the 5'-end of the 23S rRNA. It is important during the early stages of 50S assembly. It makes multiple contacts with different domains of the 23S rRNA in the assembled 50S subunit and ribosome. This protein only weakly controls expression of the E.coli S10 operon. It is incorporated into E.coli ribosomes, however it is not as firmly associated as the endogenous protein. In terms of biological role, forms part of the polypeptide exit tunnel. In Thermotoga maritima (strain ATCC 43589 / DSM 3109 / JCM 10099 / NBRC 100826 / MSB8), this protein is Large ribosomal subunit protein uL4 (rplD).